The sequence spans 702 residues: Polyribonucleotide nucleotidyltransferase (702 aa).

Mg(2+) is bound by residues aspartate 491 and aspartate 497. One can recognise a KH domain in the interval 558–618 (PKMKTFMIPV…TAIEKAYQLI (61 aa)). In terms of domain architecture, S1 motif spans 628–696 (GEKIIGPVVK…GKGKIKLQLI (69 aa)).

It belongs to the polyribonucleotide nucleotidyltransferase family. The cofactor is Mg(2+).

It localises to the cytoplasm. It carries out the reaction RNA(n+1) + phosphate = RNA(n) + a ribonucleoside 5'-diphosphate. Involved in mRNA degradation. Catalyzes the phosphorolysis of single-stranded polyribonucleotides processively in the 3'- to 5'-direction. This is Polyribonucleotide nucleotidyltransferase from Spiroplasma citri.